The sequence spans 816 residues: DNA helicase MCM8 (816 aa).

Positions 1–52 (MNGKYRGRGFGQGRFQSWKSGRGGRGFSGKWREREHRPDLNKATGKHPEQTP) are disordered. A compositionally biased stretch (basic and acidic residues) spans 30–40 (KWREREHRPDL). One can recognise an MCM domain in the interval 378–585 (LFKLIVNSLC…DHDHLLSEHV (208 aa)). 430 to 437 (GDPGLGKS) provides a ligand contact to ATP. Position 606 is a phosphoserine (Ser-606).

The protein belongs to the MCM family. Component of the MCM8-MCM9 complex, which forms a hexamer composed of MCM8 and MCM9. Interacts with the DNA mismatch repair (MMR) complex composed at least of MSH2, MSH3, MSH6, PMS1 and MLH1. Interacts with RAD51; the interaction recruits RAD51 to DNA damage sites. Interacts with the MRN complex composed of MRE11, RAD50 and NBN/NBS1. Interacts with CDC6 and ORC2. Interacts with HROB; the interaction recruits the MCM8-MCM9 complex to DNA damage sites.

Its subcellular location is the nucleus. It is found in the chromosome. It catalyses the reaction ATP + H2O = ADP + phosphate + H(+). In terms of biological role, component of the MCM8-MCM9 complex, a complex involved in the repair of double-stranded DNA breaks (DBSs) and DNA interstrand cross-links (ICLs) by homologous recombination (HR). Required for DNA resection by the MRE11-RAD50-NBN/NBS1 (MRN) complex by recruiting the MRN complex to the repair site and by promoting the complex nuclease activity. Probably by regulating the localization of the MNR complex, indirectly regulates the recruitment of downstream effector RAD51 to DNA damage sites including DBSs and ICLs. The MCM8-MCM9 complex is dispensable for DNA replication and S phase progression. However, may play a non-essential for DNA replication: may be involved in the activation of the prereplicative complex (pre-RC) during G(1) phase by recruiting CDC6 to the origin recognition complex (ORC). Probably by regulating HR, plays a key role during gametogenesis. Stabilizes MCM9 protein. The chain is DNA helicase MCM8 (MCM8) from Bos taurus (Bovine).